The following is a 322-amino-acid chain: Ribosomal RNA small subunit methyltransferase H (322 aa).

S-adenosyl-L-methionine contacts are provided by residues 40–42, Asp-60, Phe-84, Asp-106, and Gln-113; that span reads GGH.

Belongs to the methyltransferase superfamily. RsmH family.

Its subcellular location is the cytoplasm. The enzyme catalyses cytidine(1402) in 16S rRNA + S-adenosyl-L-methionine = N(4)-methylcytidine(1402) in 16S rRNA + S-adenosyl-L-homocysteine + H(+). Its function is as follows. Specifically methylates the N4 position of cytidine in position 1402 (C1402) of 16S rRNA. The chain is Ribosomal RNA small subunit methyltransferase H from Mannheimia succiniciproducens (strain KCTC 0769BP / MBEL55E).